Reading from the N-terminus, the 276-residue chain is Ribosomal RNA small subunit methyltransferase J (276 aa).

S-adenosyl-L-methionine is bound by residues 135-136 (ER) and Asp191.

This sequence belongs to the methyltransferase superfamily. RsmJ family.

Its subcellular location is the cytoplasm. The enzyme catalyses guanosine(1516) in 16S rRNA + S-adenosyl-L-methionine = N(2)-methylguanosine(1516) in 16S rRNA + S-adenosyl-L-homocysteine + H(+). Functionally, specifically methylates the guanosine in position 1516 of 16S rRNA. The polypeptide is Ribosomal RNA small subunit methyltransferase J (Hydrogenovibrio crunogenus (strain DSM 25203 / XCL-2) (Thiomicrospira crunogena)).